We begin with the raw amino-acid sequence, 265 residues long: Type 1 encapsulin shell protein (265 aa).

Belongs to the encapsulin family. Family 1 subfamily. Multimeric. The encapsulin nanocompartment is formed by 60 subunits. Monomers form pentamers which assemble to form shells. There are 12 pores where the pentamers meet as well as 3-fold axis channels and dimer channels; none are larger than 3-4 Angstroms in diameter. The N-terminus of the protein is inside the shell, the C-terminus is outside. Post-translationally, the initiator methionine is partially removed. When isolated from culture filtrate isoelectric focusing gives 3 bands, none of which are glycosylated.

The protein localises to the encapsulin nanocompartment. Its subcellular location is the secreted. It is found in the cell membrane. Its function is as follows. Shell component of a type 1 encapsulin nanocompartment in situ; its cargo protects against oxidative stress at low pH. In situ and in E.coli assembles into proteinaceous shells about 22 nm in diameter with 2.5 nm thick walls. Cargo proteins are targeted to the interior via their C-terminal extensions; empty intact shells can be isolated in E.coli in the absence of cargo protein. There are at least 4 possible cargo proteins, DyP (encoded in the same locus), FolB, BfrB and Rv1762c; DyP and Rv1762c have been identified in vivo. Probably involved in protection against oxidative damage from the host immune response. A T-cell antigen found in bacterial culture cell filtrates, stimulates mouse immune response. Does not have detectable bacteriocin activity. This chain is Type 1 encapsulin shell protein, found in Mycobacterium tuberculosis (strain ATCC 25618 / H37Rv).